The chain runs to 387 residues: Acyltransferase MdmB (387 aa).

A run of 10 helical transmembrane segments spans residues 8–28 (LPSLTGLRWFAALAVFACHIA), 45–65 (ITTLGSIAVSVFFLLSGFVLA), 85–105 (IYPLHLVTFLIAGVIIFSLAE), 139–161 (TPSWSLSCEFAFYLTFPLWYRLV), 170–190 (WWCAAGIAAAVICVPFVTSQF), 209–229 (CWLPPVRMLEFVLGIVMALIL), 236–256 (GPGVVSSALLLAAAYGVTQVV), 258–278 (PMFTIAACSIVPAALLITALA), 292–312 (AVLVRLGEWSFAFYLVHFMVI), and 336–356 (ALALAMLAVAIVAGGLLHTVV).

This sequence belongs to the acyltransferase 3 family.

Its subcellular location is the cell membrane. In terms of biological role, catalyzes the acylation of the mycaminose sugar during midecamycin biosynthesis. This chain is Acyltransferase MdmB (mdmB), found in Streptomyces mycarofaciens.